The following is a 333-amino-acid chain: MPLGLGRRKKAPPLVENEEAEPSRSGLGVGEPGPLGGSGAGESQMGLPPPPASLRPRLVFHTQLAHGSPTGRIEGFTNVKELYGKIAEAFRLPAAEVMFCTLNTHKVDMDKLLGGQIGLEDFIFAHVKGQRKEVEVFKSEDALGLTITDNGAGYAFIKRIKEGSVIDHIQLISVGDMIEAINGQSLLGCRHYEVARLLKELPRGRTFTLKLTEPRKAFDMISQRSSGGHPGSGPQLGTGRGTLRLRSRGPATVEDLPSAFEEKAIEKVDDLLESYMGIRDTELAATMVELGKDKRNPDELAEALDERLGDFAFPDEFVFDVWGAIGDAKVGRY.

Residues 1-11 (MPLGLGRRKKA) are compositionally biased toward basic residues. Positions 1–55 (MPLGLGRRKKAPPLVENEEAEPSRSGLGVGEPGPLGGSGAGESQMGLPPPPASLR) are disordered. Gly residues predominate over residues 27–40 (LGVGEPGPLGGSGA). S68 carries the post-translational modification Phosphoserine. In terms of domain architecture, PDZ spans 133-213 (EVEVFKSEDA…GRTFTLKLTE (81 aa)). Residues 221 to 244 (ISQRSSGGHPGSGPQLGTGRGTLR) are disordered. S222, S225, and S232 each carry phosphoserine. Residues 228–240 (GHPGSGPQLGTGR) are compositionally biased toward gly residues. At T242 the chain carries Phosphothreonine. Position 247 is a phosphoserine (S247).

This sequence belongs to the GIPC family. Interacts with SDC4/syndecan-4 and SEMA4C/semaphorin-4C. Interacts with RGS19 (C-terminus), GLUT1 (C-terminus), ACTN1, KIF1B, MYO6 and PLEKHG5. Widely expressed.

Its subcellular location is the cytoplasm. The protein resides in the membrane. Its function is as follows. May be involved in G protein-linked signaling. The polypeptide is PDZ domain-containing protein GIPC1 (Gipc1) (Rattus norvegicus (Rat)).